A 750-amino-acid polypeptide reads, in one-letter code: Methylmalonyl-CoA mutase, mitochondrial (750 aa).

The N-terminal 32 residues, 1 to 32 (MLRAKNQLFLLSPHYLRQVKESSGSRLIQQRL), are a transit peptide targeting the mitochondrion. Glutamine 50 serves as a coordination point for malonyl-CoA. Position 89 is an N6-acetyllysine (lysine 89). Malonyl-CoA is bound by residues 96–99 (YPTM) and 106–110 (TIRQY). Lysine 212 carries the post-translational modification N6-acetyllysine. Residues 216–218 (TIQ), arginine 228, lysine 255, histidine 265, and 304–306 (RLS) contribute to the malonyl-CoA site. Lysine 335 is subject to N6-acetyllysine. Residue lysine 343 is modified to N6-succinyllysine. Serine 481 carries the post-translational modification Phosphoserine. Lysine 595 carries the N6-succinyllysine modification. Lysine 602 carries the post-translational modification N6-acetyllysine. The region spanning 614 to 746 (RPRLLVAKMG…DDIEKCLEKK (133 aa)) is the B12-binding domain. Residue histidine 627 coordinates adenosylcob(III)alamin.

The protein belongs to the methylmalonyl-CoA mutase family. In terms of assembly, homodimer. Interacts (the apoenzyme form) with MMAA; the interaction is GTP dependent. It depends on adenosylcob(III)alamin as a cofactor.

The protein resides in the mitochondrion matrix. The protein localises to the mitochondrion. It localises to the cytoplasm. It catalyses the reaction (R)-methylmalonyl-CoA = succinyl-CoA. With respect to regulation, inhibited by itaconyl-CoA, a metabolite that inactivates the coenzyme B12 cofactor. Its function is as follows. Catalyzes the reversible isomerization of methylmalonyl-CoA (MMCoA) (generated from branched-chain amino acid metabolism and degradation of dietary odd chain fatty acids and cholesterol) to succinyl-CoA (3-carboxypropionyl-CoA), a key intermediate of the tricarboxylic acid cycle. The polypeptide is Methylmalonyl-CoA mutase, mitochondrial (MMUT) (Bos taurus (Bovine)).